We begin with the raw amino-acid sequence, 162 residues long: tRNA (cytidine(34)-2'-O)-methyltransferase (162 aa).

Residues Leu-80, Gly-102, Leu-124, and Ser-132 each coordinate S-adenosyl-L-methionine.

It belongs to the class IV-like SAM-binding methyltransferase superfamily. RNA methyltransferase TrmH family. TrmL subfamily. As to quaternary structure, homodimer.

It localises to the cytoplasm. The enzyme catalyses cytidine(34) in tRNA + S-adenosyl-L-methionine = 2'-O-methylcytidine(34) in tRNA + S-adenosyl-L-homocysteine + H(+). It carries out the reaction 5-carboxymethylaminomethyluridine(34) in tRNA(Leu) + S-adenosyl-L-methionine = 5-carboxymethylaminomethyl-2'-O-methyluridine(34) in tRNA(Leu) + S-adenosyl-L-homocysteine + H(+). Methylates the ribose at the nucleotide 34 wobble position in the two leucyl isoacceptors tRNA(Leu)(CmAA) and tRNA(Leu)(cmnm5UmAA). Catalyzes the methyl transfer from S-adenosyl-L-methionine to the 2'-OH of the wobble nucleotide. The protein is tRNA (cytidine(34)-2'-O)-methyltransferase of Acidovorax sp. (strain JS42).